A 764-amino-acid polypeptide reads, in one-letter code: Irregular chiasm C-roughest protein (764 aa).

An N-terminal signal peptide occupies residues 1-19 (MLHTMQLLLLATIVGMVRS). The Extracellular portion of the chain corresponds to 20–533 (SPYTSYQNQR…QAKKSVSLLM (514 aa)). Ig-like C2-type domains follow at residues 21–120 (PYTS…PAIR), 132–230 (PEAP…AKIR), 237–343 (PKVK…LDIS), 346–419 (PSFR…AEIS), and 430–530 (PAIG…KSVS). 5 cysteine pairs are disulfide-bonded: C49-C107, C155-C214, C281-C325, C367-C408, and C450-C508. N211, N313, N393, N400, and N507 each carry an N-linked (GlcNAc...) asparagine glycan. The helical transmembrane segment at 534 to 556 (TIVGGISVVAFLLVLTILVVVYI) threads the bilayer. Residues 557 to 764 (KCKKRTKLPP…SSLLPPPTAV (208 aa)) are Cytoplasmic-facing. Disordered regions lie at residues 640 to 660 (HQNQ…HHTQ) and 691 to 719 (NGLP…STTA). Residues 692–701 (GLPSLQSTTA) are compositionally biased toward polar residues. The span at 702–719 (SVVSSSPNGSCSNQSTTA) shows a compositional bias: low complexity.

In terms of tissue distribution, postembryonic expression is strong in the developing optic lobe and in the eye imaginal disk.

The protein resides in the membrane. Functionally, required for correct axonal pathway formation in the optic lobe and for programmed cell death in the developing retina. The protein is Irregular chiasm C-roughest protein (rst) of Drosophila melanogaster (Fruit fly).